The primary structure comprises 443 residues: F-box only protein 39 (443 aa).

In terms of domain architecture, F-box spans 13–59; the sequence is QSCWATLPDVCLRRVFWWLGDRDRSRAALVCRKWNQIMYSADLWRYR.

Directly interacts with SKP1 and CUL1.

Functionally, substrate-recognition component of the SCF (SKP1-CUL1-F-box protein)-type E3 ubiquitin ligase complex. This chain is F-box only protein 39 (Fbxo39), found in Rattus norvegicus (Rat).